The primary structure comprises 173 residues: Shikimate kinase 1 (173 aa).

Residue 14-19 (GAGKST) coordinates ATP. Ser18 lines the Mg(2+) pocket. 3 residues coordinate substrate: Asp36, Arg60, and Gly82. Position 120 (Arg120) interacts with ATP. Arg140 contributes to the substrate binding site. Residue Gln157 coordinates ATP.

Belongs to the shikimate kinase family. As to quaternary structure, monomer. Requires Mg(2+) as cofactor.

It is found in the cytoplasm. The catalysed reaction is shikimate + ATP = 3-phosphoshikimate + ADP + H(+). It participates in metabolic intermediate biosynthesis; chorismate biosynthesis; chorismate from D-erythrose 4-phosphate and phosphoenolpyruvate: step 5/7. Functionally, catalyzes the specific phosphorylation of the 3-hydroxyl group of shikimic acid using ATP as a cosubstrate. The protein is Shikimate kinase 1 of Pectobacterium atrosepticum (strain SCRI 1043 / ATCC BAA-672) (Erwinia carotovora subsp. atroseptica).